A 122-amino-acid chain; its full sequence is Large ribosomal subunit protein bL12 (122 aa).

Belongs to the bacterial ribosomal protein bL12 family. In terms of assembly, homodimer. Part of the ribosomal stalk of the 50S ribosomal subunit. Forms a multimeric L10(L12)X complex, where L10 forms an elongated spine to which 2 to 4 L12 dimers bind in a sequential fashion. Binds GTP-bound translation factors.

Forms part of the ribosomal stalk which helps the ribosome interact with GTP-bound translation factors. Is thus essential for accurate translation. The sequence is that of Large ribosomal subunit protein bL12 from Mycoplasma mycoides subsp. mycoides SC (strain CCUG 32753 / NCTC 10114 / PG1).